Consider the following 397-residue polypeptide: Subtilisin-like protease 12 (397 aa).

The N-terminal stretch at Met1–Ala19 is a signal peptide. A propeptide spanning residues Ala20–Ala116 is cleaved from the precursor. The Inhibitor I9 domain occupies Tyr35–Ala115. Residues Asn123, Asn136, and Asn150 are each glycosylated (N-linked (GlcNAc...) asparagine). The region spanning Thr125–Ala397 is the Peptidase S8 domain. Residues Asp157 and His188 each act as charge relay system in the active site. N-linked (GlcNAc...) asparagine glycosylation is found at Asn249, Asn305, and Asn334. Ser343 functions as the Charge relay system in the catalytic mechanism. N-linked (GlcNAc...) asparagine glycans are attached at residues Asn385 and Asn393.

This sequence belongs to the peptidase S8 family.

It localises to the secreted. In terms of biological role, secreted subtilisin-like serine protease with keratinolytic activity that contributes to pathogenicity. This Arthroderma gypseum (strain ATCC MYA-4604 / CBS 118893) (Microsporum gypseum) protein is Subtilisin-like protease 12 (SUB12).